The sequence spans 142 residues: Small ribosomal subunit protein uS9 (142 aa).

This sequence belongs to the universal ribosomal protein uS9 family. In terms of assembly, component of the small ribosomal subunit (SSU). Mature N.crassa ribosomes consist of a small (40S) and a large (60S) subunit. The 40S small subunit contains 1 molecule of ribosomal RNA (18S rRNA) and at least 32 different proteins. The large 60S subunit contains 3 rRNA molecules (26S, 5.8S and 5S rRNA) and at least 42 different proteins.

It localises to the cytoplasm. Functionally, component of the ribosome, a large ribonucleoprotein complex responsible for the synthesis of proteins in the cell. The small ribosomal subunit (SSU) binds messenger RNAs (mRNAs) and translates the encoded message by selecting cognate aminoacyl-transfer RNA (tRNA) molecules. The large subunit (LSU) contains the ribosomal catalytic site termed the peptidyl transferase center (PTC), which catalyzes the formation of peptide bonds, thereby polymerizing the amino acids delivered by tRNAs into a polypeptide chain. The nascent polypeptides leave the ribosome through a tunnel in the LSU and interact with protein factors that function in enzymatic processing, targeting, and the membrane insertion of nascent chains at the exit of the ribosomal tunnel. The chain is Small ribosomal subunit protein uS9 (rps-16) from Neurospora crassa (strain ATCC 24698 / 74-OR23-1A / CBS 708.71 / DSM 1257 / FGSC 987).